Reading from the N-terminus, the 233-residue chain is Large ribosomal subunit protein uL1 (233 aa).

Belongs to the universal ribosomal protein uL1 family. Part of the 50S ribosomal subunit.

Functionally, binds directly to 23S rRNA. The L1 stalk is quite mobile in the ribosome, and is involved in E site tRNA release. Its function is as follows. Protein L1 is also a translational repressor protein, it controls the translation of the L11 operon by binding to its mRNA. The chain is Large ribosomal subunit protein uL1 from Aeromonas hydrophila subsp. hydrophila (strain ATCC 7966 / DSM 30187 / BCRC 13018 / CCUG 14551 / JCM 1027 / KCTC 2358 / NCIMB 9240 / NCTC 8049).